Consider the following 1377-residue polypeptide: Dicer-like protein 2 (1377 aa).

A Helicase ATP-binding domain is found at 23–203 (MFEASLKENI…MKTLESNLDS (181 aa)). An ATP-binding site is contributed by 36-43 (MDTGTGKT). The short motif at 144-147 (DEAH) is the DEAH box element. Residues 368–531 (ALINFLDKFD…AYQDEERRLR (164 aa)) enclose the Helicase C-terminal domain. Residues 561–655 (VVTHLYHFCA…LPLTKNPEMR (95 aa)) enclose the Dicer dsRNA-binding fold domain. 2 RNase III domains span residues 914-1052 (RLCA…LDGG) and 1092-1275 (DGDL…VDSG). Mg(2+) contacts are provided by E1131, D1261, and E1264.

This sequence belongs to the helicase family. Dicer subfamily. The cofactor is Mg(2+). Mn(2+) is required as a cofactor.

Functionally, dicer-like endonuclease involved in cleaving double-stranded RNA in the RNA interference (RNAi) pathway. Produces 21 to 25 bp dsRNAs (siRNAs) which target the selective destruction of homologous RNAs leading to sequence-specific suppression of gene expression, called post-transcriptional gene silencing (PTGS). Part of a broad host defense response against viral infection and transposons. This chain is Dicer-like protein 2 (dcl2), found in Aspergillus oryzae (strain ATCC 42149 / RIB 40) (Yellow koji mold).